The chain runs to 261 residues: Glutamate racemase (261 aa).

Substrate-binding positions include 7-8 (DS) and 39-40 (YG). The active-site Proton donor/acceptor is the cysteine 71. Residue 72-73 (NT) coordinates substrate. The active-site Proton donor/acceptor is cysteine 184. 185 to 186 (TH) contributes to the substrate binding site.

This sequence belongs to the aspartate/glutamate racemases family.

The catalysed reaction is L-glutamate = D-glutamate. It functions in the pathway cell wall biogenesis; peptidoglycan biosynthesis. Its function is as follows. Provides the (R)-glutamate required for cell wall biosynthesis. This Aliarcobacter butzleri (strain RM4018) (Arcobacter butzleri) protein is Glutamate racemase.